The chain runs to 447 residues: N-succinylarginine dihydrolase (447 aa).

Substrate-binding positions include 19–28, Asn110, and 137–138; these read AGLSFGNEAS and HR. Residue Glu174 is part of the active site. Arg212 lines the substrate pocket. His248 is a catalytic residue. 2 residues coordinate substrate: Asp250 and Asn359. Catalysis depends on Cys365, which acts as the Nucleophile.

It belongs to the succinylarginine dihydrolase family. Homodimer.

The enzyme catalyses N(2)-succinyl-L-arginine + 2 H2O + 2 H(+) = N(2)-succinyl-L-ornithine + 2 NH4(+) + CO2. The protein operates within amino-acid degradation; L-arginine degradation via AST pathway; L-glutamate and succinate from L-arginine: step 2/5. Functionally, catalyzes the hydrolysis of N(2)-succinylarginine into N(2)-succinylornithine, ammonia and CO(2). This Escherichia coli O81 (strain ED1a) protein is N-succinylarginine dihydrolase.